Consider the following 349-residue polypeptide: Alcohol dehydrogenase 1 (349 aa).

7 residues coordinate Zn(2+): Cys-46, His-69, Cys-100, Cys-103, Cys-106, Cys-114, and Cys-156. NAD(+)-binding positions include 180–186 (GAGGGLG), Asp-204, Lys-208, 270–272 (VGL), and Arg-342.

This sequence belongs to the zinc-containing alcohol dehydrogenase family. As to quaternary structure, homotetramer. Zn(2+) is required as a cofactor.

It catalyses the reaction a primary alcohol + NAD(+) = an aldehyde + NADH + H(+). The catalysed reaction is a secondary alcohol + NAD(+) = a ketone + NADH + H(+). The chain is Alcohol dehydrogenase 1 from Caenorhabditis elegans.